Reading from the N-terminus, the 428-residue chain is Immunoglobulin superfamily member 11 (428 aa).

A signal peptide spans 1–22 (MTRRRSAPASWLLVSLLGVATS). Residues 23-136 (LEVSESPGSV…DRGGRNIGVT (114 aa)) enclose the Ig-like V-type domain. Residues 23–240 (LEVSESPGSV…QVISPQPRSV (218 aa)) are Extracellular-facing. Cystine bridges form between C44/C120 and C165/C215. An N-linked (GlcNAc...) asparagine glycan is attached at N102. The Ig-like C2-type domain occupies 144–234 (PSAPQCQIQG…TCLLDLQVIS (91 aa)). The helical transmembrane segment at 241–261 (GVIAGAVGTGAVLIVICLALI) threads the bilayer. The Cytoplasmic portion of the chain corresponds to 262–428 (SGAFFYWRSK…PAQSRAGSLV (167 aa)). R375 carries the omega-N-methylarginine modification. A compositionally biased stretch (polar residues) spans 376–389 (GSSPQVLPRNNGSV). Positions 376–396 (GSSPQVLPRNNGSVSRKPWPQ) are disordered.

Post-translationally, N-glycosylated. As to expression, highly expressed in testis and detected in kidney and adrenal gland. In brain, expressed in commissure fibers of the corpus callosum and pyramidal cell layers of the dentate gyrus and hippocampus where it is probably expressed by both neurons and glial cells.

It localises to the cell membrane. Functions as a cell adhesion molecule through homophilic interaction. Stimulates cell growth. The chain is Immunoglobulin superfamily member 11 (Igsf11) from Mus musculus (Mouse).